Consider the following 660-residue polypeptide: MGLQTTKWPGRGAFILKFWLIISLGLYLQVSKLLACPSVCRCDRNFVYCNERSLTSVPLGIPEGVTVLYLHNNQINNAGFPAELHNVQSVHTVYLYGNQLDEFPMNLPKNVRVLHLQENNIQTISRAALAQLLKLEELHLDDNSISTVGVEDGAFREAISLKLLFLSKNHLSSVPVGLPVDLQELRVDENRIAVISDMAFQNLTSLERLIVDGNLLTNKGIAEGTFSHLTKLKEFSIVRNSLSHPPPDLPGTHLIRLYLQDNQINHIPLTAFANLRKLERLDISNNQLRMLTQGVFDHLSNLKQLTARNNPWFCDCSIKWVTEWLKYIPSSLNVRGFMCQGPEQVRGMAVRELNMNLLSCPTTTPGLPVFTPAPSTVSPTTQSPTLSVPSPSRGSVPPAPTPSKLPTIPDWDGRERVTPPISERIQLSIHFVNDTSIQVSWLSLFTVMAYKLTWVKMGHSLVGGIVQERIVSGEKQHLSLVNLEPRSTYRICLVPLDAFNYRTVEDTICSEATTHASYLNNGSNTASSHEQTTSHSMGSPFLLAGLIGGAVIFVLVVLLSVFCWHMHKKGRYTSQKWKYNRGRRKDDYCEAGTKKDNSILEMTETSFQIVSLNNDQLLKGDFRLQPIYTPNGGINYTDCHIPNNMRYCNSSVPDLEHCHT.

An N-terminal signal peptide occupies residues 1–35 (MGLQTTKWPGRGAFILKFWLIISLGLYLQVSKLLA). Cystine bridges form between cysteine 36–cysteine 42 and cysteine 40–cysteine 49. Positions 36–63 (CPSVCRCDRNFVYCNERSLTSVPLGIPE) constitute an LRRNT domain. Topologically, residues 36 to 540 (CPSVCRCDRN…QTTSHSMGSP (505 aa)) are extracellular. LRR repeat units lie at residues 62-87 (PEGVTVLYLHNNQINNAGFPAELHNV), 88-108 (QSVHTVYLYGNQLDEFPMNLP), 109-131 (KNVRVLHLQENNIQTISRAALAQ), 132-157 (LLKLEELHLDDNSISTVGVEDGAFRE), 159-181 (ISLKLLFLSKNHLSSVPVGLPVD), 183-202 (QELRVDENRIAVISDMAFQN), 203-228 (LTSLERLIVDGNLLTNKGIAEGTFSH), 229-251 (LTKLKEFSIVRNSLSHPPPDLPG), 252-274 (THLIRLYLQDNQINHIPLTAFAN), and 275-298 (LRKLERLDISNNQLRMLTQGVFDH). N-linked (GlcNAc...) asparagine glycosylation occurs at asparagine 202. The LRRCT domain occupies 310 to 362 (NPWFCDCSIKWVTEWLKYIPSSLNVRGFMCQGPEQVRGMAVRELNMNLLSCPT). Intrachain disulfides connect cysteine 314/cysteine 339 and cysteine 316/cysteine 360. A compositionally biased stretch (low complexity) spans 371–396 (TPAPSTVSPTTQSPTLSVPSPSRGSV). Positions 371–413 (TPAPSTVSPTTQSPTLSVPSPSRGSVPPAPTPSKLPTIPDWDG) are disordered. Positions 419 to 517 (PPISERIQLS…ICSEATTHAS (99 aa)) constitute a Fibronectin type-III domain. The chain crosses the membrane as a helical span at residues 541 to 561 (FLLAGLIGGAVIFVLVVLLSV). The Cytoplasmic segment spans residues 562 to 660 (FCWHMHKKGR…SVPDLEHCHT (99 aa)).

In terms of assembly, self-associates (via leucine-rich repeats), giving rise to homooligomers. Interacts with FGFR1. Interacts with FGFR2. Interacts (via extracellular domain) with ADGRL1/LPHN1. Interacts (via extracellular domain) with ADGRL3 (via olfactomedin-like domain). Interacts (via extracellular domain) with UNC5D (via the first Ig-like domain). Can also interact (via extracellular domain) with UNC5B, but with much lower affinity. Interacts (via extracellular domain) with FN1. In terms of processing, N-glycosylated. Proteolytic cleavage in the juxtamembrane region gives rise to a soluble ectodomain. Cleavage is probably effected by a metalloprotease. In terms of tissue distribution, detected in adult brain (at protein level).

Its subcellular location is the cell membrane. It is found in the endoplasmic reticulum membrane. The protein resides in the cell junction. The protein localises to the focal adhesion. It localises to the secreted. Its subcellular location is the extracellular space. It is found in the extracellular matrix. The protein resides in the synapse. The protein localises to the synaptosome. It localises to the microsome membrane. Functions in cell-cell adhesion, cell migration and axon guidance. Mediates cell-cell adhesion via its interactions with ADGRL3 and probably also other latrophilins that are expressed at the surface of adjacent cells. May play a role in the migration of cortical neurons during brain development via its interaction with UNC5D. Mediates axon growth cone collapse and plays a repulsive role in neuron guidance via its interaction with UNC5D, and possibly also other UNC-5 family members. Plays a role in fibroblast growth factor-mediated signaling cascades. Required for normal organization of the cardiac basement membrane during embryogenesis, and for normal embryonic epicardium and heart morphogenesis. The protein is Leucine-rich repeat transmembrane protein FLRT2 of Mus musculus (Mouse).